Here is a 396-residue protein sequence, read N- to C-terminus: Chalcone synthase (396 aa).

Residue Cys169 is part of the active site.

Belongs to the thiolase-like superfamily. Chalcone/stilbene synthases family.

It carries out the reaction (E)-4-coumaroyl-CoA + 3 malonyl-CoA + 3 H(+) = 2',4,4',6'-tetrahydroxychalcone + 3 CO2 + 4 CoA. It functions in the pathway secondary metabolite biosynthesis; flavonoid biosynthesis. The primary product of this enzyme is 4,2',4',6'-tetrahydroxychalcone (also termed naringenin-chalcone or chalcone) which can under specific conditions spontaneously isomerize into naringenin. The protein is Chalcone synthase (CHS) of Pinus sylvestris (Scotch pine).